The sequence spans 754 residues: 17S U2 SnRNP complex component HTATSF1 (754 aa).

Disordered stretches follow at residues 1–53 and 81–122; these read MSGT…YEWD and GASS…KAES. Residue S2 is modified to N-acetylserine. Positions 90 to 122 are enriched in basic and acidic residues; sequence EDVHARTAEEPPQEKAPEPTDPRKKGEKRKAES. RRM domains follow at residues 133 to 218 and 264 to 349; these read TNVY…VAKF and RVVI…AWDG. Positions 259-353 are U2AF homology motif (UHM); the sequence is RMRHERVVII…AQAWDGTTDY (95 aa). K297 is modified (N6-acetyllysine). Residues 380-415 form a disordered region; it reads RGLRRSDSVSASERAGPSRARHFSEHPSTSKMNAQE. Residues 381–754 are mediates interaction with the P-TEFb complex; the sequence is GLRRSDSVSA…ILSSDDDDDI (374 aa). Phosphoserine occurs at positions 387, 403, 407, and 409. A compositionally biased stretch (polar residues) spans 405–415; sequence HPSTSKMNAQE. Residues K429 and K430 each participate in a glycyl lysine isopeptide (Lys-Gly) (interchain with G-Cter in SUMO2) cross-link. Residues 433 to 754 form a disordered region; it reads KTEDGGEFEE…ILSSDDDDDI (322 aa). Phosphoserine occurs at positions 445, 452, and 453. The segment covering 462–476 has biased composition (basic and acidic residues); it reads CPGKESEEGCPKRGF. S481, S485, S494, S498, S521, and S529 each carry phosphoserine. Over residues 508–538 the composition is skewed to basic and acidic residues; the sequence is LRNDCEENGFAKESEDDPNKESEEEVGPTKE. Residues 539–552 show a composition bias toward acidic residues; that stretch reads SEEDDSEKESDEDC. Positions 553–563 are enriched in basic and acidic residues; that stretch reads SEKQSEDGSER. Residues S557, S561, and S579 each carry the phosphoserine modification. The span at 564–579 shows a compositional bias: acidic residues; it reads EFEENGLEKDLDEEGS. The span at 580 to 590 shows a compositional bias: basic and acidic residues; that stretch reads EKELHENVLDK. Acidic residues predominate over residues 591-606; the sequence is ELEENDSENSEFEDDG. Phosphoserine is present on residues S597, S600, S607, S616, and S624. 2 stretches are compositionally biased toward acidic residues: residues 613 to 633 and 640 to 651; these read EEGS…EEDT and DESNEKEDEEYA. A Phosphothreonine modification is found at T633. A Phosphoserine modification is found at S642. The segment covering 652 to 674 has biased composition (basic and acidic residues); it reads DEKGLEAADKKEEEGDADEKLFE. The segment covering 675–713 has biased composition (acidic residues); that stretch reads ESDDKEDEDADGKEVEDADEKLFEDDDSNEKLFDEEEDS. Phosphoserine is present on residues S676, S702, S713, S721, and S748. The span at 714–725 shows a compositional bias: basic and acidic residues; sequence NEKLFDDSDERG.

Belongs to the HTATSF1 family. As to quaternary structure, component of the 17S U2 SnRNP complex, a ribonucleoprotein complex that contains small nuclear RNA (snRNA) U2 and a number of specific proteins. Within the 17S U2 SnRNP complex, interacts (via UHM region) directly with SF3B1. Component of a complex which is at least composed of HTATSF1/Tat-SF1, the P-TEFb complex components CDK9 and CCNT1, RNA polymerase II, SUPT5H, and NCL/nucleolin. Interacts with GTF2F2/RAP30 and POLR2A. Interacts with TCERG1/CA150. Interacts with (poly-ADP-ribosylated) RPA1; promoting HTATSF1 recruitment to DNA damage sites. Interacts (when phosphorylated) with TOPBP1; promoting recruitment of TOPBP1 to DNA damage sites during S-phase. In terms of processing, phosphorylation at Ser-748 by CK2 during S-phase in response to DNA damage promotes interaction with TOPBP1 and double-strand break (DSB) repair via homologous recombination.

Its subcellular location is the nucleus. The protein resides in the chromosome. Component of the 17S U2 SnRNP complex of the spliceosome, a large ribonucleoprotein complex that removes introns from transcribed pre-mRNAs. The 17S U2 SnRNP complex (1) directly participates in early spliceosome assembly and (2) mediates recognition of the intron branch site during pre-mRNA splicing by promoting the selection of the pre-mRNA branch-site adenosine, the nucleophile for the first step of splicing. Within the 17S U2 SnRNP complex, HTATSF1 is required to stabilize the branchpoint-interacting stem loop. HTATSF1 is displaced from the 17S U2 SnRNP complex before the stable addition of the 17S U2 SnRNP complex to the spliceosome, destabilizing the branchpoint-interacting stem loop and allowing to probe intron branch site sequences. Also acts as a regulator of transcriptional elongation, possibly by mediating the reciprocal stimulatory effect of splicing on transcriptional elongation. Involved in double-strand break (DSB) repair via homologous recombination in S-phase by promoting the recruitment of TOPBP1 to DNA damage sites. Mechanistically, HTATSF1 is (1) recruited to DNA damage sites in S-phase via interaction with poly-ADP-ribosylated RPA1 and (2) phosphorylated by CK2, promoting recruitment of TOPBP1, thereby facilitating RAD51 nucleofilaments formation and RPA displacement, followed by homologous recombination. This is 17S U2 SnRNP complex component HTATSF1 (HTATSF1) from Pongo abelii (Sumatran orangutan).